The chain runs to 291 residues: Probable cell wall amidase LytH (291 aa).

Residues 1–40 form the signal peptide; the sequence is MKKIDSWLTKHGLKNRLTLVVIVIFIIFLILLFMFVNLSD. Residues 41–105 form the SH3b domain; it reads EDTGQITITE…WVAGWHTNLN (65 aa). The 165-residue stretch at 122-286 folds into the MurNAc-LAA domain; it reads IVLDPGHGGS…VEQAIVDGLK (165 aa). The segment at 123–147 is disordered; sequence VLDPGHGGSDQGASSSTPSKSLEKN. The segment covering 133 to 142 has biased composition (polar residues); that stretch reads QGASSSTPSK.

Belongs to the N-acetylmuramoyl-L-alanine amidase 3 family.

The protein localises to the secreted. Functionally, probably involved in cell-wall metabolism. This Staphylococcus epidermidis (strain ATCC 35984 / DSM 28319 / BCRC 17069 / CCUG 31568 / BM 3577 / RP62A) protein is Probable cell wall amidase LytH (lytH).